Consider the following 347-residue polypeptide: Bifunctional methylenetetrahydrofolate dehydrogenase/cyclohydrolase 2, mitochondrial (347 aa).

Residues 98–102 (YVRNK) and 145–147 (VQL) contribute to the substrate site. NAD(+) is bound by residues 214 to 216 (GRS) and arginine 247. 323–327 (PGGVG) contributes to the substrate binding site.

This sequence belongs to the tetrahydrofolate dehydrogenase/cyclohydrolase family. The cofactor is Mg(2+). Isoform 1, isoform 4 and isoform 5 are expressed in brain and placenta.

It is found in the mitochondrion inner membrane. The enzyme catalyses (6R)-5,10-methylene-5,6,7,8-tetrahydrofolate + NAD(+) = (6R)-5,10-methenyltetrahydrofolate + NADH. It carries out the reaction (6R)-5,10-methenyltetrahydrofolate + H2O = (6R)-10-formyltetrahydrofolate + H(+). It catalyses the reaction (6R)-5,10-methylene-5,6,7,8-tetrahydrofolate + NADP(+) = (6R)-5,10-methenyltetrahydrofolate + NADPH. Its pathway is one-carbon metabolism; tetrahydrofolate interconversion. Its function is as follows. Bifunctional mitochondrial folate-interconverting enzyme that has both NAD/NADP-dependent methylenetetrahydrofolate dehydrogenase and methenyltetrahydrofolate cyclohydrolase activities. This is Bifunctional methylenetetrahydrofolate dehydrogenase/cyclohydrolase 2, mitochondrial from Homo sapiens (Human).